Reading from the N-terminus, the 793-residue chain is uncharacterized protein (793 aa).

Positions 1-21 (MLKKTLLAYTIGFAFSPPANA) are cleaved as a signal peptide. A disulfide bond links cysteine 769 and cysteine 792.

It belongs to the fimbrial export usher family.

It localises to the cell outer membrane. Its function is as follows. Involved in the export and assembly of a fimbrial subunit across the outer membrane. This is an uncharacterized protein from Escherichia coli (strain K12).